The following is an 89-amino-acid chain: Small ribosomal subunit protein uS15 (89 aa).

The span at 1–21 (MAITQERKNQLINEFKTHESD) shows a compositional bias: basic and acidic residues. The interval 1-24 (MAITQERKNQLINEFKTHESDTGS) is disordered.

Belongs to the universal ribosomal protein uS15 family. In terms of assembly, part of the 30S ribosomal subunit. Forms a bridge to the 50S subunit in the 70S ribosome, contacting the 23S rRNA.

One of the primary rRNA binding proteins, it binds directly to 16S rRNA where it helps nucleate assembly of the platform of the 30S subunit by binding and bridging several RNA helices of the 16S rRNA. In terms of biological role, forms an intersubunit bridge (bridge B4) with the 23S rRNA of the 50S subunit in the ribosome. This chain is Small ribosomal subunit protein uS15, found in Bacillus subtilis (strain 168).